The sequence spans 215 residues: Adenylate kinase (215 aa).

10 to 15 (GAGKGT) lines the ATP pocket. The segment at 30–59 (STGDMLRAAVKAGSPLGQQVKGVMDSGGLV) is NMP. Residues threonine 31, arginine 36, 57-59 (GLV), 85-88 (GFPR), and glutamine 92 contribute to the AMP site. The tract at residues 122–159 (GRRVHPASGRVYHTEHNPPKVAGKDDVTGEDLIQREDD) is LID. Residues arginine 123 and 132–133 (VY) each bind ATP. AMP is bound by residues arginine 156 and arginine 167. Residue glycine 201 coordinates ATP.

It belongs to the adenylate kinase family. In terms of assembly, monomer.

Its subcellular location is the cytoplasm. It carries out the reaction AMP + ATP = 2 ADP. The protein operates within purine metabolism; AMP biosynthesis via salvage pathway; AMP from ADP: step 1/1. In terms of biological role, catalyzes the reversible transfer of the terminal phosphate group between ATP and AMP. Plays an important role in cellular energy homeostasis and in adenine nucleotide metabolism. The sequence is that of Adenylate kinase from Pseudomonas paraeruginosa (strain DSM 24068 / PA7) (Pseudomonas aeruginosa (strain PA7)).